We begin with the raw amino-acid sequence, 443 residues long: Thymidine phosphorylase (443 aa).

It belongs to the thymidine/pyrimidine-nucleoside phosphorylase family. In terms of assembly, homodimer.

It catalyses the reaction thymidine + phosphate = 2-deoxy-alpha-D-ribose 1-phosphate + thymine. It participates in pyrimidine metabolism; dTMP biosynthesis via salvage pathway; dTMP from thymine: step 1/2. In terms of biological role, the enzymes which catalyze the reversible phosphorolysis of pyrimidine nucleosides are involved in the degradation of these compounds and in their utilization as carbon and energy sources, or in the rescue of pyrimidine bases for nucleotide synthesis. The polypeptide is Thymidine phosphorylase (Aeromonas hydrophila subsp. hydrophila (strain ATCC 7966 / DSM 30187 / BCRC 13018 / CCUG 14551 / JCM 1027 / KCTC 2358 / NCIMB 9240 / NCTC 8049)).